A 307-amino-acid chain; its full sequence is Putative ankyrin repeat protein R229 (307 aa).

ANK repeat units follow at residues 135 to 164 (ASRV…DINV), 165 to 194 (DNDK…NVHA), 196 to 224 (DDEA…NVNA), 226 to 254 (NDYA…NPMA), 256 to 284 (RYYP…SMVY), and 286 to 307 (SYAM…LLLD).

This chain is Putative ankyrin repeat protein R229, found in Acanthamoeba polyphaga (Amoeba).